Consider the following 268-residue polypeptide: 4-hydroxy-tetrahydrodipicolinate reductase (268 aa).

NAD(+) contacts are provided by residues 7–12 (GAGGRM) and glutamate 33. Arginine 34 contacts NADP(+). Residues 97–99 (GTT) and 121–124 (SGNM) each bind NAD(+). Histidine 155 (proton donor/acceptor) is an active-site residue. Histidine 156 is a (S)-2,3,4,5-tetrahydrodipicolinate binding site. The active-site Proton donor is lysine 159. 165 to 166 (GT) lines the (S)-2,3,4,5-tetrahydrodipicolinate pocket.

The protein belongs to the DapB family.

It localises to the cytoplasm. It carries out the reaction (S)-2,3,4,5-tetrahydrodipicolinate + NAD(+) + H2O = (2S,4S)-4-hydroxy-2,3,4,5-tetrahydrodipicolinate + NADH + H(+). It catalyses the reaction (S)-2,3,4,5-tetrahydrodipicolinate + NADP(+) + H2O = (2S,4S)-4-hydroxy-2,3,4,5-tetrahydrodipicolinate + NADPH + H(+). Its pathway is amino-acid biosynthesis; L-lysine biosynthesis via DAP pathway; (S)-tetrahydrodipicolinate from L-aspartate: step 4/4. Catalyzes the conversion of 4-hydroxy-tetrahydrodipicolinate (HTPA) to tetrahydrodipicolinate. The polypeptide is 4-hydroxy-tetrahydrodipicolinate reductase (Brucella abortus (strain 2308)).